Here is a 474-residue protein sequence, read N- to C-terminus: MSKKLHIKTWGCQMNEYDSSKMADLLDEYQGYTLTDDATEADVLLLNTCSIREKAQEKVFHQLGRWKTLKDKKPGLIIGVGGCVASQEGKAIKDRAQCVDIIFGPQTLHRLPEMIDQVQRGEKVVIDVSFPEIEKFDRLPEPRADGPTAFVSIMEGCSKYCSFCVVPYTRGEEVSRPQDDIILEIAQLAEQGVREVNLLGQNVNAYRGATHDDQICTFAELLRLVASIDGIDRIRFTTSHPIEFTQDIIDVYEDTPELVSFLHLPVQSGSDRILTQMKRGHMAIEYKSIIRRLRKAREGIQISSDFIIGFPGESAEDFADTMKLIEDVAFDHSFSFIYSARPGTPAADLPDDVSDEEKKQRLAILQDRITQQAMRYSRQMLGTVQRILVEGPSVKNPMELRGRTENNRVVNFEAPHTHIGSFVDVEIVDVYTNSLRGIFIRGEAEMDLRRSLRPADILAKHKQDDVLGVTQFTP.

The MTTase N-terminal domain maps to 3-120 (KKLHIKTWGC…LPEMIDQVQR (118 aa)). Residues Cys12, Cys49, Cys83, Cys157, Cys161, and Cys164 each contribute to the [4Fe-4S] cluster site. Residues 143 to 375 (RADGPTAFVS…QDRITQQAMR (233 aa)) form the Radical SAM core domain. Residues 378 to 441 (RQMLGTVQRI…TNSLRGIFIR (64 aa)) form the TRAM domain.

The protein belongs to the methylthiotransferase family. MiaB subfamily. Monomer. The cofactor is [4Fe-4S] cluster.

The protein localises to the cytoplasm. It carries out the reaction N(6)-dimethylallyladenosine(37) in tRNA + (sulfur carrier)-SH + AH2 + 2 S-adenosyl-L-methionine = 2-methylsulfanyl-N(6)-dimethylallyladenosine(37) in tRNA + (sulfur carrier)-H + 5'-deoxyadenosine + L-methionine + A + S-adenosyl-L-homocysteine + 2 H(+). Its function is as follows. Catalyzes the methylthiolation of N6-(dimethylallyl)adenosine (i(6)A), leading to the formation of 2-methylthio-N6-(dimethylallyl)adenosine (ms(2)i(6)A) at position 37 in tRNAs that read codons beginning with uridine. The chain is tRNA-2-methylthio-N(6)-dimethylallyladenosine synthase from Shewanella denitrificans (strain OS217 / ATCC BAA-1090 / DSM 15013).